The primary structure comprises 685 residues: Stromal interaction molecule 1 (685 aa).

An N-terminal signal peptide occupies residues 1–22 (MDVCARLALWLLWGLLLHQGQS). Residues 23–213 (LSHSHSEKNT…LLTRHNHLKD (191 aa)) are Extracellular-facing. A disordered region spans residues 24 to 43 (SHSHSEKNTGASSGATSEES). Residues 32–41 (TGASSGATSE) are compositionally biased toward low complexity. EF-hand domains lie at 64–97 (SFEA…EDLN) and 102–126 (TVKH…AWKS). D76, D78, N80, D82, and E87 together coordinate Ca(2+). N131 and N171 each carry an N-linked (GlcNAc...) asparagine glycan. Residues 132-200 (WTVDEVIQWL…QLKALDTVLF (69 aa)) form the SAM domain. A helical transmembrane segment spans residues 214–234 (FMLVVSIVIGVGGCWFAYIQN). Residues 235–685 (RYSKEHMKKM…LKIFKKPLKK (451 aa)) are Cytoplasmic-facing. Residues 248 to 442 (LEGLHRAEQS…IEILCGFQIV (195 aa)) are a coiled coil. S257 carries the post-translational modification Phosphoserine. Residues 344–442 (PEALQKWLQL…IEILCGFQIV (99 aa)) form an SOAR/CAD region. The contributes to fast Ca(2+)-dependent inactivation of CRAC channels stretch occupies residues 475 to 483 (DDVDDMDEE). A compositionally biased stretch (low complexity) spans 490 to 499 (MQSPSLQSSV). A disordered region spans residues 490 to 541 (MQSPSLQSSVRQRLTEPQLGLGSQRDLTHSDSESSLHMSDRQRVAPKPPQMG). Residue T504 is modified to Phosphothreonine. The residue at position 512 (S512) is a Phosphoserine. The span at 515 to 532 (DLTHSDSESSLHMSDRQR) shows a compositional bias: basic and acidic residues. T517 bears the Phosphothreonine mark. Residues S519, S521, S523, S524, S567, S575, S602, S608, S618, S621, and S628 each carry the phosphoserine modification. The interval 596-685 (LMELNPSVPP…LKIFKKPLKK (90 aa)) is disordered. Residues 608–620 (SPLLDSSHSLSPS) are compositionally biased toward low complexity. A Microtubule tip localization signal motif is present at residues 642-645 (TRIP). Over residues 655–666 (EEDNGSIGEETD) the composition is skewed to acidic residues. S660 carries the post-translational modification Phosphoserine. T665 carries the phosphothreonine modification. S668 bears the Phosphoserine mark. The span at 670-685 (GRKKFPLKIFKKPLKK) shows a compositional bias: basic residues. Residues 672-685 (KKFPLKIFKKPLKK) form a required for generation of inwardly rectifying CRAC currents region.

Monomer in the presence of Ca(2+). It oligomerizes in absence of Ca(2+). Forms homooligomers and heterooligomers with STIM2. Interacts with pore-forming subunits of CRAC channels, ORAI1, ORAI2 and ORAI3; this interaction is potentiated upon Ca(2+) store depletion. Interacts (via the transmembrane region and the SOAR/CAD domain) with SPPL3; the interaction promotes the binding of STIM1 to ORAI1. Interacts with ORAI1. Interacts with MAPRE1; probably required for targeting to the growing microtubule plus ends. Interacts with CRACR2A/EFCAB4B; the interaction is direct and takes place in absence of Ca(2+). Forms a complex with CRACR2A/EFCAB4B and ORAI1 at low concentration of Ca(2+), the complex dissociates at elevated Ca(2+) concentrations. Interacts with SARAF, promoting a slow inactivation of STIM1-dependent SOCE activity, possibly by facilitating the deoligomerization of STIM1. Interacts with EFHB; the interaction takes place upon Ca(2+)-store depletion and inhibits the association with SARAF. Interacts with ASPH. Interacts with SLC35G1; intracellular Ca(2+)-dependent. May interact with ATP1A1, ATP2A2, ATP2B1, ATP2B4, KPNB1 and XPO1; through SLC35G1. Interacts with STIMATE, promoting STIM1 conformational switch. Interacts with TMEM178A. Interacts with CASQ1 (via C-terminal end and preferentially with the monomeric form); this interaction increases in response to a depletion of intracellular Ca(2+), decreases both STIM1 aggregation and clustering, interaction of STIM1 with ORAI1 and store-operated Ca(2+) entry (SOCE) activity. Interacts with ADCY8. Interacts with TMEM203. Post-translationally, glycosylation is required for cell surface expression. Phosphorylated predominantly on Ser residues. Expressed in maturation-stage ameloblasts (at protein level). Expressed in all tissues examined and in many cell types, including bone marrow stroma, fibroblast, B-cell precursors, lymphoma and erythroleukemia.

The protein localises to the cell membrane. It is found in the endoplasmic reticulum membrane. Its subcellular location is the sarcoplasmic reticulum. It localises to the cytoplasm. The protein resides in the cytoskeleton. Its function is as follows. Acts as a Ca(2+) sensor that gates two major inward rectifying Ca(2+) channels at the plasma membrane: Ca(2+) release-activated Ca(2+) (CRAC) channels and arachidonate-regulated Ca(2+)-selective (ARC) channels. Plays a role in mediating store-operated Ca(2+) entry (SOCE), a Ca(2+) influx following depletion of intracellular Ca(2+) stores. Upon Ca(2+) depletion, translocates from the endoplasmic reticulum to the plasma membrane where it activates CRAC channel pore-forming subunits ORA1, ORA2 and ORAI3 to generate sustained and oscillatory Ca(2+) entry. Involved in enamel formation. This is Stromal interaction molecule 1 (Stim1) from Mus musculus (Mouse).